The chain runs to 316 residues: Transaldolase (316 aa).

K132 acts as the Schiff-base intermediate with substrate in catalysis.

It belongs to the transaldolase family. Type 1 subfamily. As to quaternary structure, homodimer.

It localises to the cytoplasm. The enzyme catalyses D-sedoheptulose 7-phosphate + D-glyceraldehyde 3-phosphate = D-erythrose 4-phosphate + beta-D-fructose 6-phosphate. It functions in the pathway carbohydrate degradation; pentose phosphate pathway; D-glyceraldehyde 3-phosphate and beta-D-fructose 6-phosphate from D-ribose 5-phosphate and D-xylulose 5-phosphate (non-oxidative stage): step 2/3. In terms of biological role, transaldolase is important for the balance of metabolites in the pentose-phosphate pathway. This Aliivibrio salmonicida (strain LFI1238) (Vibrio salmonicida (strain LFI1238)) protein is Transaldolase.